Here is a 695-residue protein sequence, read N- to C-terminus: Eukaryotic translation initiation factor 3 subunit B (695 aa).

The segment covering 1–10 (MAKKKGDEKA) has biased composition (basic and acidic residues). A disordered region spans residues 1–43 (MAKKKGDEKANPAPQSDNEEQNFEEEPDFDDPEDFVEIPEEEL). A compositionally biased stretch (acidic residues) spans 17–43 (DNEEQNFEEEPDFDDPEDFVEIPEEEL). One can recognise an RRM domain in the interval 60–144 (NVVVVDGCPQ…HTFLVNLFTD (85 aa)). 4 WD repeats span residues 164 to 205 (KVQS…PLLL), 295 to 335 (PPDE…LLDK), 338 to 373 (IKIP…TLLE), and 444 to 486 (EIKE…APTL).

It belongs to the eIF-3 subunit B family. In terms of assembly, component of the eukaryotic translation initiation factor 3 (eIF-3) complex.

The protein localises to the cytoplasm. Functionally, RNA-binding component of the eukaryotic translation initiation factor 3 (eIF-3) complex, which is involved in protein synthesis of a specialized repertoire of mRNAs and, together with other initiation factors, stimulates binding of mRNA and methionyl-tRNAi to the 40S ribosome. The eIF-3 complex specifically targets and initiates translation of a subset of mRNAs involved in cell proliferation. The chain is Eukaryotic translation initiation factor 3 subunit B from Bombyx mori (Silk moth).